Reading from the N-terminus, the 214-residue chain is Pyridoxine/pyridoxamine 5'-phosphate oxidase (214 aa).

Residues 9 to 12 and Lys-67 each bind substrate; that span reads RKSY. FMN contacts are provided by residues 62–67, 77–78, Arg-83, Lys-84, and Gln-106; these read RIVLLK and YT. Substrate contacts are provided by Tyr-124, Arg-128, and Ser-132. Residues 141–142 and Trp-186 each bind FMN; that span reads QS. 192–194 provides a ligand contact to substrate; that stretch reads RLH. Position 196 (Arg-196) interacts with FMN.

The protein belongs to the pyridoxamine 5'-phosphate oxidase family. As to quaternary structure, homodimer. FMN is required as a cofactor.

The enzyme catalyses pyridoxamine 5'-phosphate + O2 + H2O = pyridoxal 5'-phosphate + H2O2 + NH4(+). It carries out the reaction pyridoxine 5'-phosphate + O2 = pyridoxal 5'-phosphate + H2O2. It functions in the pathway cofactor metabolism; pyridoxal 5'-phosphate salvage; pyridoxal 5'-phosphate from pyridoxamine 5'-phosphate: step 1/1. Its pathway is cofactor metabolism; pyridoxal 5'-phosphate salvage; pyridoxal 5'-phosphate from pyridoxine 5'-phosphate: step 1/1. Catalyzes the oxidation of either pyridoxine 5'-phosphate (PNP) or pyridoxamine 5'-phosphate (PMP) into pyridoxal 5'-phosphate (PLP). In Leptospira interrogans serogroup Icterohaemorrhagiae serovar copenhageni (strain Fiocruz L1-130), this protein is Pyridoxine/pyridoxamine 5'-phosphate oxidase.